Here is a 263-residue protein sequence, read N- to C-terminus: MKPTTISLLQKCKQEKKRFATITAYDYSFAKLFADEGINVMLVGDSLGMTIQGHDSTLPVTVEDIAYHTRAVRRGAPNCLLLSDLPFMAYATPEQACENAAIVMRAGANMVKIEGGAWLVDTVKMLTERAVPVCGHLGLTPQSVNIFGGYKIQGRGDAGQMLLDDALALEAAGAQLLVLECVPVELAKRVTEALSIPVIGIGAGNVTDGQILVMHDAFGITGGHIPKFAKNFLAEAGDMRAAVRQYMAEVESGVYPGEEHSFH.

Residues Asp45 and Asp84 each contribute to the Mg(2+) site. 3-methyl-2-oxobutanoate-binding positions include 45–46 (DS), Asp84, and Lys112. Glu114 contacts Mg(2+). The Proton acceptor role is filled by Glu180.

It belongs to the PanB family. Homodecamer; pentamer of dimers. The cofactor is Mg(2+).

Its subcellular location is the cytoplasm. It carries out the reaction 3-methyl-2-oxobutanoate + (6R)-5,10-methylene-5,6,7,8-tetrahydrofolate + H2O = 2-dehydropantoate + (6S)-5,6,7,8-tetrahydrofolate. Its pathway is cofactor biosynthesis; (R)-pantothenate biosynthesis; (R)-pantoate from 3-methyl-2-oxobutanoate: step 1/2. Its function is as follows. Catalyzes the reversible reaction in which hydroxymethyl group from 5,10-methylenetetrahydrofolate is transferred onto alpha-ketoisovalerate to form ketopantoate. The polypeptide is 3-methyl-2-oxobutanoate hydroxymethyltransferase (Salmonella agona (strain SL483)).